Consider the following 85-residue polypeptide: U4-theraphotoxin-Hhn1a (85 aa).

An N-terminal signal peptide occupies residues Met-1–Ala-22. The propeptide occupies Glu-23–Arg-48. 3 disulfide bridges follow: Cys-52/Cys-66, Cys-56/Cys-77, and Cys-71/Cys-82.

This sequence belongs to the neurotoxin 12 (Hwtx-2) family. 02 (Hwtx-2) subfamily. In terms of assembly, monomer. As to expression, expressed by the venom gland.

It is found in the secreted. Neurotoxin active on both insects and mammals. The polypeptide is U4-theraphotoxin-Hhn1a (Cyriopagopus hainanus (Chinese bird spider)).